The sequence spans 312 residues: Olfactory receptor 51B6 (312 aa).

Residues 1 to 23 (MGLNKSASTFQLTGFPGMEKAHH) are Extracellular-facing. Asparagine 4 carries an N-linked (GlcNAc...) asparagine glycan. A helical transmembrane segment spans residues 24 to 44 (WIFIPLLAAYISILLGNGTLL). Residues 45–52 (FLIRNDHN) lie on the Cytoplasmic side of the membrane. A helical transmembrane segment spans residues 53 to 73 (LHEPMYYFLAMLAATDLGVTL). Residues 74–97 (TTMPTVLGVLWLDHREIGHGACFS) lie on the Extracellular side of the membrane. Cysteine 95 and cysteine 187 are oxidised to a cystine. Residues 98–118 (QAYFIHTLSVMESGVLLAMAY) form a helical membrane-spanning segment. The Cytoplasmic segment spans residues 119-137 (DCFITIRSPLRYTSILTNT). Residues 138 to 158 (QVMKIGVRVLTRAGLSIMPIV) form a helical membrane-spanning segment. At 159-194 (VRLHWFPYCRSHVLSHAFCLHQDVIKLACADITFNR) the chain is on the extracellular side. The helical transmembrane segment at 195–215 (LYPVVVLFAMVLLDFLIIFFS) threads the bilayer. At 216-235 (YILILKTVMGIGSGGERAKA) the chain is on the cytoplasmic side. A helical membrane pass occupies residues 236-256 (LNTCVSHICCILVFYVTVVCL). Residues 257–271 (TFIHRFGKHVPHVVH) are Extracellular-facing. A helical transmembrane segment spans residues 272–292 (ITMSYIHFLFPPFMNPFIYSI). The Cytoplasmic portion of the chain corresponds to 293-312 (KTKQIQSGILRLFSLPHSRA).

This sequence belongs to the G-protein coupled receptor 1 family.

It is found in the cell membrane. In terms of biological role, odorant receptor. This Homo sapiens (Human) protein is Olfactory receptor 51B6 (OR51B6).